A 143-amino-acid chain; its full sequence is Large ribosomal subunit protein uL11 (143 aa).

It belongs to the universal ribosomal protein uL11 family. In terms of assembly, part of the ribosomal stalk of the 50S ribosomal subunit. Interacts with L10 and the large rRNA to form the base of the stalk. L10 forms an elongated spine to which L12 dimers bind in a sequential fashion forming a multimeric L10(L12)X complex. Post-translationally, one or more lysine residues are methylated.

In terms of biological role, forms part of the ribosomal stalk which helps the ribosome interact with GTP-bound translation factors. The chain is Large ribosomal subunit protein uL11 from Azoarcus sp. (strain BH72).